A 193-amino-acid chain; its full sequence is Rho-related GTP-binding protein RhoA-D (193 aa).

Residues 12–19 (GDGACGKT), 30–37 (FPEVYVPT), 59–63 (DTAGQ), 117–120 (NKKD), and 160–162 (SAK) contribute to the GTP site. Residue Tyr-34 is glycosylated ((Microbial infection) O-linked (GlcNAc) tyrosine; by Yersinia Afp18). Cys-190 is subject to Cysteine methyl ester. Cys-190 carries the S-geranylgeranyl cysteine lipid modification. Residues 191 to 193 (LLL) constitute a propeptide, removed in mature form.

It belongs to the small GTPase superfamily. Rho family. In terms of processing, (Microbial infection) Glycosylated at Tyr-34 by Yersinia ruckeri toxin Afp18. Mono-O-GlcNAcylation by Afp18 inhibits RhoA activation by guanine nucleotide exchange factors and blocks RhoA signaling.

The protein resides in the cell membrane. Functionally, regulates a signal transduction pathway linking plasma membrane receptors to the assembly of focal adhesions and actin stress fibers. In Danio rerio (Zebrafish), this protein is Rho-related GTP-binding protein RhoA-D.